Consider the following 482-residue polypeptide: MKFIVKPHPEIFVKSESVRKRFTKILESNIRIIIQNRTESVAVFNRRDHIEVSANSHQYYQQVLEILTTTPGIQQVLEVKQSGFKDLHDIYEQVLELSRERIENKTFVVRAKRRGKHDFTSIELERYVGGGLNQSVESASVKLHNPDITIKIEVVDDKLNQILAHHKGLGGFPLGTQEDLLSLISGGFDSGVSSYLHIKRGSKVHYCFFNLGGPAHEIGVKQVAHFLWNKYGSSAKVRFISVDFEPVVAEILEKVEDGQMGVVLKRMFMRAAGMVAEKFDIQALVTGEALGQVSSQTLTNLRHIDVVTDRLILRPLINWDKDEIIKVARDIGTEDFAKTMPEYCGVISKKPTVKAVKEKLEAEEANFNFDILEQVVRNARQMDIRDIAKESAQAAPEVEQVQAIEEHAVVLDIRSPDEEDDSPLEIDGVEVKHIPFYKLSTQFGDLDQSKTYLLYCARGVMSRLQALYLQEQGFNNVKVYRP.

The region spanning 61–165 (QQVLEILTTT…DDKLNQILAH (105 aa)) is the THUMP domain. Residues 183-184 (LI), K265, G287, and Q296 contribute to the ATP site. A disulfide bond links C344 and C456. Positions 404 to 482 (IEEHAVVLDI…GFNNVKVYRP (79 aa)) constitute a Rhodanese domain. C456 (cysteine persulfide intermediate) is an active-site residue.

It belongs to the ThiI family.

The protein localises to the cytoplasm. It carries out the reaction [ThiI sulfur-carrier protein]-S-sulfanyl-L-cysteine + a uridine in tRNA + 2 reduced [2Fe-2S]-[ferredoxin] + ATP + H(+) = [ThiI sulfur-carrier protein]-L-cysteine + a 4-thiouridine in tRNA + 2 oxidized [2Fe-2S]-[ferredoxin] + AMP + diphosphate. The enzyme catalyses [ThiS sulfur-carrier protein]-C-terminal Gly-Gly-AMP + S-sulfanyl-L-cysteinyl-[cysteine desulfurase] + AH2 = [ThiS sulfur-carrier protein]-C-terminal-Gly-aminoethanethioate + L-cysteinyl-[cysteine desulfurase] + A + AMP + 2 H(+). Its pathway is cofactor biosynthesis; thiamine diphosphate biosynthesis. Functionally, catalyzes the ATP-dependent transfer of a sulfur to tRNA to produce 4-thiouridine in position 8 of tRNAs, which functions as a near-UV photosensor. Also catalyzes the transfer of sulfur to the sulfur carrier protein ThiS, forming ThiS-thiocarboxylate. This is a step in the synthesis of thiazole, in the thiamine biosynthesis pathway. The sulfur is donated as persulfide by IscS. The sequence is that of tRNA sulfurtransferase from Vibrio vulnificus (strain CMCP6).